We begin with the raw amino-acid sequence, 82 residues long: MALSLFTVGQLIFLFWTMRITEASPDPAAKAAPAAAAAPAAAAPDTASDAAAAAALTAANAKAAAELTAANAAAAAAATARG.

The N-terminal stretch at 1–23 (MALSLFTVGQLIFLFWTMRITEA) is a signal peptide. Positions 24–44 (SPDPAAKAAPAAAAAPAAAAP) are cleaved as a propeptide — removed by a dipeptidylpeptidase. Residue arginine 81 is modified to Arginine amide.

It belongs to the type-I AFP family. Detected in liver and in blood serum (at protein level).

It is found in the secreted. In terms of biological role, contributes to protect fish blood from freezing at subzero sea water temperatures. Lowers the blood freezing point. Binds to nascent ice crystals and prevents further growth. In Pseudopleuronectes americanus (Winter flounder), this protein is Ice-structuring protein A.